Consider the following 67-residue polypeptide: Large ribosomal subunit protein uL29 (67 aa).

Belongs to the universal ribosomal protein uL29 family.

The protein is Large ribosomal subunit protein uL29 of Clostridium acetobutylicum (strain ATCC 824 / DSM 792 / JCM 1419 / IAM 19013 / LMG 5710 / NBRC 13948 / NRRL B-527 / VKM B-1787 / 2291 / W).